Reading from the N-terminus, the 395-residue chain is Elongation factor Tu (395 aa).

The 196-residue stretch at 10 to 205 (KPHVNIGTIG…VDSYIPLPPR (196 aa)) folds into the tr-type G domain. The interval 19-26 (GHVDHGKT) is G1. Position 19–26 (19–26 (GHVDHGKT)) interacts with GTP. Mg(2+) is bound at residue Thr26. The interval 60–64 (GITIN) is G2. The segment at 81–84 (DCPG) is G3. Residues 81 to 85 (DCPGH) and 136 to 139 (NKVD) each bind GTP. The interval 136 to 139 (NKVD) is G4. The G5 stretch occupies residues 174 to 176 (SAT).

It belongs to the TRAFAC class translation factor GTPase superfamily. Classic translation factor GTPase family. EF-Tu/EF-1A subfamily. Monomer.

The protein resides in the cytoplasm. It catalyses the reaction GTP + H2O = GDP + phosphate + H(+). Its function is as follows. GTP hydrolase that promotes the GTP-dependent binding of aminoacyl-tRNA to the A-site of ribosomes during protein biosynthesis. This is Elongation factor Tu from Terrimonas ferruginea (Flavobacterium ferrugineum).